A 384-amino-acid chain; its full sequence is DNA dC-&gt;dU-editing enzyme APOBEC-3G (384 aa).

Residues 1–60 (MKPHFRNTVERMYRDTFSYNFYNRPILSRRNTVWLCYEVKTKGPSRPPLDAKIFRGQVYS) are essential for cytoplasmic localization. Positions 29–138 (RRNTVWLCYE…PDYQEALRSL (110 aa)) constitute a CMP/dCMP-type deaminase 1 domain. Thr-32 bears the Phosphothreonine; by PKA mark. (Microbial infection) Glycyl lysine isopeptide (Lys-Gly) (interchain with G-Cter in ubiquitin) cross-links involve residues Lys-42, Lys-52, and Lys-63. Residues His-65, Cys-97, and Cys-100 each coordinate Zn(2+). Residues Lys-150 and Lys-163 each participate in a (Microbial infection) Glycyl lysine isopeptide (Lys-Gly) (interchain with G-Cter in ubiquitin) cross-link. A necessary for homooligomerization region spans residues 209–336 (EPWVRGRHET…TLAEAGAKIS (128 aa)). The tract at residues 213 to 215 (RGR) is interaction with DNA. The CMP/dCMP-type deaminase 2 domain maps to 214–328 (GRHETYLCYE…GRCQEGLRTL (115 aa)). A Phosphothreonine; by PKA and CAMK2 modification is found at Thr-218. Lys-249 participates in a covalent cross-link: (Microbial infection) Glycyl lysine isopeptide (Lys-Gly) (interchain with G-Cter in ubiquitin). His-257 serves as a coordination point for Zn(2+). Glu-259 acts as the Proton donor in catalysis. Lys-270 is covalently cross-linked ((Microbial infection) Glycyl lysine isopeptide (Lys-Gly) (interchain with G-Cter in ubiquitin)). Zn(2+) contacts are provided by Cys-288 and Cys-291. (Microbial infection) Glycyl lysine isopeptide (Lys-Gly) (interchain with G-Cter in ubiquitin) cross-links involve residues Lys-297, Lys-301, and Lys-303. An interaction with DNA region spans residues 313–320 (RIYDDQGR). Lys-334 is covalently cross-linked ((Microbial infection) Glycyl lysine isopeptide (Lys-Gly) (interchain with G-Cter in ubiquitin)).

It belongs to the cytidine and deoxycytidylate deaminase family. Homodimer. Homooligomer. Can bind RNA to form ribonucleoprotein complexes of high-molecular-mass (HMM) or low-molecular-mass (LMM). HMM is inactive and heterogeneous in protein composition because of binding nonselectively to cellular RNAs, which in turn are associated with variety of cellular proteins. The LMM form which is enzymatically active has few or no RNAs associated. Its ability to form homooligomer is distinct from its ability to assemble into HMM. Interacts with APOBEC3B, APOBEC3F, MOV10, AGO2, EIF4E, EIF4ENIF1, DCP2 and DDX6 in an RNA-dependent manner. Interacts with AGO1, AGO3 and PKA/PRKACA. In terms of assembly, (Microbial infection) Interacts with HIV-1 Vif; promoting its ubiquitination by a cullin-5-RING E3 ubiquitin-protein ligase complex (ECS complex) hijacked by the HIV-1 Vif. As to quaternary structure, (Microbial infection) Interacts with HIV-1 reverse transcriptase/ribonuclease H. (Microbial infection) Interacts with hepatitis B virus capsid protein. The cofactor is Zn(2+). (Microbial infection) Following infection by HIV-1, ubiquitinated by a cullin-5-RING E3 ubiquitin-protein ligase complex (ECS complex) hijacked by the HIV-1 Vif protein, leading to its degradation. Deubiquitinated by USP49; leading to stabilization. In terms of processing, phosphorylation at Thr-32 reduces its binding to HIV-1 Vif and subsequent ubiquitination and degradation thus promoting its antiviral activity. Expressed in spleen, testes, ovary and peripheral blood leukocytes and CD4+ lymphocytes. Also expressed in non-permissive peripheral blood mononuclear cells, and several tumor cell lines; no expression detected in permissive lymphoid and non-lymphoid cell lines. Exists only in the LMM form in peripheral blood-derived resting CD4 T-cells and monocytes, both of which are refractory to HIV-1 infection. LMM is converted to a HMM complex when resting CD4 T-cells are activated or when monocytes are induced to differentiate into macrophages. This change correlates with increased susceptibility of these cells to HIV-1 infection.

It is found in the cytoplasm. It localises to the nucleus. Its subcellular location is the P-body. The enzyme catalyses a 2'-deoxycytidine in single-stranded DNA + H2O + H(+) = a 2'-deoxyuridine in single-stranded DNA + NH4(+). (Microbial infection) Antiviral activity is neutralized by the HIV-1 virion infectivity factor (Vif), that prevents its incorporation into progeny virions by both inhibiting its translation and/or by inducing its ubiquitination and subsequent degradation by the 26S proteasome. Can also be neutralized by simian immunodeficiency virus sooty mangabey monkey virus (SIV-sm) and chimpanzee immunodeficiency virus (SIV-cpz) Vif. Its function is as follows. DNA deaminase (cytidine deaminase) which acts as an inhibitor of retrovirus replication and retrotransposon mobility via deaminase-dependent and -independent mechanisms. Exhibits potent antiviral activity against Vif-deficient HIV-1. After the penetration of retroviral nucleocapsids into target cells of infection and the initiation of reverse transcription, it can induce the conversion of cytosine to uracil in the minus-sense single-strand viral DNA, leading to G-to-A hypermutations in the subsequent plus-strand viral DNA. The resultant detrimental levels of mutations in the proviral genome, along with a deamination-independent mechanism that works prior to the proviral integration, together exert efficient antiretroviral effects in infected target cells. Selectively targets single-stranded DNA and does not deaminate double-stranded DNA or single- or double-stranded RNA. Exhibits antiviral activity also against simian immunodeficiency viruses (SIVs), hepatitis B virus (HBV), equine infectious anemia virus (EIAV), xenotropic MuLV-related virus (XMRV) and simian foamy virus (SFV). May inhibit the mobility of LTR and non-LTR retrotransposons. The protein is DNA dC-&gt;dU-editing enzyme APOBEC-3G of Homo sapiens (Human).